A 1202-amino-acid chain; its full sequence is Ribonuclease P protein component, mitochondrial (1202 aa).

The transit peptide at 1-122 directs the protein to the mitochondrion; that stretch reads MAFKSFIYSK…NNNNNQHRYY (122 aa). The tract at residues 109-134 is disordered; the sequence is NYVNNNNNNQHRYYSTGPTLPTNQYD. The span at 118 to 134 shows a compositional bias: polar residues; it reads QHRYYSTGPTLPTNQYD.

In terms of assembly, consists of an RNA moiety (RPM1) and the protein component (RPM2). Both are necessary for full enzymatic activity.

Its subcellular location is the mitochondrion. It carries out the reaction Endonucleolytic cleavage of RNA, removing 5'-extranucleotides from tRNA precursor.. In terms of biological role, ribonuclease P generates mature tRNA molecules by cleaving their 5'-ends. This Saccharomyces cerevisiae (strain ATCC 204508 / S288c) (Baker's yeast) protein is Ribonuclease P protein component, mitochondrial (RPM2).